A 502-amino-acid polypeptide reads, in one-letter code: Nondiscriminating glutamyl-tRNA synthetase EARS2, mitochondrial (502 aa).

Residues 1-20 constitute a mitochondrion transit peptide; sequence MAGMLREVCGAAASGLRVRF. 19–21 contacts L-glutamate; it reads RFG. The 'HIGH' region motif lies at 24-32; the sequence is PTGFLHLGG. Residue His29 participates in ATP binding. L-glutamate contacts are provided by residues Glu55, 207-211, and Arg225; that span reads YHLAN. Residues Glu228 and 263–267 contribute to the ATP site; that span reads KLSKR. The 'KMSKS' region signature appears at 263-267; that stretch reads KLSKR.

This sequence belongs to the class-I aminoacyl-tRNA synthetase family. Glutamate--tRNA ligase type 1 subfamily.

Its subcellular location is the mitochondrion matrix. The catalysed reaction is tRNA(Glx) + L-glutamate + ATP = L-glutamyl-tRNA(Glx) + AMP + diphosphate. The enzyme catalyses tRNA(Glu) + L-glutamate + ATP = L-glutamyl-tRNA(Glu) + AMP + diphosphate. It catalyses the reaction tRNA(Gln) + L-glutamate + ATP = L-glutamyl-tRNA(Gln) + AMP + diphosphate. Its function is as follows. Non-discriminating glutamyl-tRNA synthetase that catalyzes aminoacylation of both mitochondrial tRNA(Glu) and tRNA(Gln) and participates in RNA aminoacylation for mitochondrial protein translation. Attachs glutamate to tRNA(Glu) or tRNA(Gln) in a two-step reaction: glutamate is first activated by ATP to form Glu-AMP and then transferred to the acceptor end of tRNA(Glu) or tRNA(Gln). The protein is Nondiscriminating glutamyl-tRNA synthetase EARS2, mitochondrial of Gallus gallus (Chicken).